The chain runs to 159 residues: Secreted RxLR effector protein 50 (159 aa).

Positions 1–19 (MRSSTVLYVLGAAILAVNG) are cleaved as a signal peptide. The RxLR-dEER motif lies at 38–54 (RWLRSNAMEHETDDEER).

This sequence belongs to the RxLR effector family.

It localises to the secreted. Its subcellular location is the host nucleus. It is found in the host cytoplasm. Functionally, secreted effector that completely suppresses the host cell death induced by cell death-inducing proteins. This is Secreted RxLR effector protein 50 from Plasmopara viticola (Downy mildew of grapevine).